The following is a 209-amino-acid chain: Endonuclease III (209 aa).

Residues 108 to 127 form the HhH domain; it reads RTELESLPGVGRKTANIILN. Residues cysteine 187, cysteine 194, cysteine 197, and cysteine 203 each contribute to the [4Fe-4S] cluster site.

This sequence belongs to the Nth/MutY family. It depends on [4Fe-4S] cluster as a cofactor.

It catalyses the reaction 2'-deoxyribonucleotide-(2'-deoxyribose 5'-phosphate)-2'-deoxyribonucleotide-DNA = a 3'-end 2'-deoxyribonucleotide-(2,3-dehydro-2,3-deoxyribose 5'-phosphate)-DNA + a 5'-end 5'-phospho-2'-deoxyribonucleoside-DNA + H(+). Its function is as follows. DNA repair enzyme that has both DNA N-glycosylase activity and AP-lyase activity. The DNA N-glycosylase activity releases various damaged pyrimidines from DNA by cleaving the N-glycosidic bond, leaving an AP (apurinic/apyrimidinic) site. The AP-lyase activity cleaves the phosphodiester bond 3' to the AP site by a beta-elimination, leaving a 3'-terminal unsaturated sugar and a product with a terminal 5'-phosphate. This chain is Endonuclease III, found in Buchnera aphidicola subsp. Schizaphis graminum (strain Sg).